The chain runs to 337 residues: Holliday junction branch migration complex subunit RuvB (337 aa).

The interval 4 to 186 is large ATPase domain (RuvB-L); that stretch reads ADRLIAADNP…FGIVQRLEYY (183 aa). ATP-binding positions include isoleucine 25, arginine 26, glycine 67, lysine 70, threonine 71, threonine 72, 133 to 135, arginine 176, tyrosine 186, and arginine 223; that span reads EDY. Threonine 71 lines the Mg(2+) pocket. The small ATPAse domain (RuvB-S) stretch occupies residues 187 to 257; the sequence is KVDDLQYIVQ…IADKALNMLD (71 aa). The segment at 260–337 is head domain (RuvB-H); the sequence is VCGFDYMDRK…LHFGIDRPDK (78 aa). Positions 315 and 320 each coordinate DNA.

It belongs to the RuvB family. As to quaternary structure, homohexamer. Forms an RuvA(8)-RuvB(12)-Holliday junction (HJ) complex. HJ DNA is sandwiched between 2 RuvA tetramers; dsDNA enters through RuvA and exits via RuvB. An RuvB hexamer assembles on each DNA strand where it exits the tetramer. Each RuvB hexamer is contacted by two RuvA subunits (via domain III) on 2 adjacent RuvB subunits; this complex drives branch migration. In the full resolvosome a probable DNA-RuvA(4)-RuvB(12)-RuvC(2) complex forms which resolves the HJ.

The protein localises to the cytoplasm. It catalyses the reaction ATP + H2O = ADP + phosphate + H(+). The RuvA-RuvB-RuvC complex processes Holliday junction (HJ) DNA during genetic recombination and DNA repair, while the RuvA-RuvB complex plays an important role in the rescue of blocked DNA replication forks via replication fork reversal (RFR). RuvA specifically binds to HJ cruciform DNA, conferring on it an open structure. The RuvB hexamer acts as an ATP-dependent pump, pulling dsDNA into and through the RuvAB complex. RuvB forms 2 homohexamers on either side of HJ DNA bound by 1 or 2 RuvA tetramers; 4 subunits per hexamer contact DNA at a time. Coordinated motions by a converter formed by DNA-disengaged RuvB subunits stimulates ATP hydrolysis and nucleotide exchange. Immobilization of the converter enables RuvB to convert the ATP-contained energy into a lever motion, pulling 2 nucleotides of DNA out of the RuvA tetramer per ATP hydrolyzed, thus driving DNA branch migration. The RuvB motors rotate together with the DNA substrate, which together with the progressing nucleotide cycle form the mechanistic basis for DNA recombination by continuous HJ branch migration. Branch migration allows RuvC to scan DNA until it finds its consensus sequence, where it cleaves and resolves cruciform DNA. This Aliivibrio salmonicida (strain LFI1238) (Vibrio salmonicida (strain LFI1238)) protein is Holliday junction branch migration complex subunit RuvB.